Consider the following 765-residue polypeptide: 5-methyltetrahydropteroyltriglutamate--homocysteine methyltransferase (765 aa).

Residues 16–19 and Lys-121 contribute to the 5-methyltetrahydropteroyltri-L-glutamate site; that span reads RELK. L-homocysteine-binding positions include 441-443 and Glu-494; that span reads IGS. L-methionine contacts are provided by residues 441 to 443 and Glu-494; that span reads IGS. 5-methyltetrahydropteroyltri-L-glutamate-binding positions include 525–526 and Trp-571; that span reads RC. Asp-609 serves as a coordination point for L-homocysteine. L-methionine is bound at residue Asp-609. Glu-615 is a 5-methyltetrahydropteroyltri-L-glutamate binding site. Zn(2+) contacts are provided by His-651, Cys-653, and Glu-675. His-704 (proton donor) is an active-site residue. Cys-736 lines the Zn(2+) pocket.

It belongs to the vitamin-B12 independent methionine synthase family. Requires Zn(2+) as cofactor.

The catalysed reaction is 5-methyltetrahydropteroyltri-L-glutamate + L-homocysteine = tetrahydropteroyltri-L-glutamate + L-methionine. It functions in the pathway amino-acid biosynthesis; L-methionine biosynthesis via de novo pathway; L-methionine from L-homocysteine (MetE route): step 1/1. In terms of biological role, catalyzes the transfer of a methyl group from 5-methyltetrahydrofolate to homocysteine resulting in methionine formation. The protein is 5-methyltetrahydropteroyltriglutamate--homocysteine methyltransferase of Saccharophagus degradans (strain 2-40 / ATCC 43961 / DSM 17024).